The sequence spans 304 residues: Probable alpha-L-glutamate ligase 2 (304 aa).

In terms of domain architecture, ATP-grasp spans 107 to 290 (HQLLARKGVG…IAGAIIDYIV (184 aa)). ATP is bound by residues lysine 144, 181 to 182 (EF), aspartate 190, and 214 to 216 (RSN). Mg(2+) contacts are provided by aspartate 251, glutamate 263, and asparagine 265. Mn(2+)-binding residues include aspartate 251, glutamate 263, and asparagine 265.

The protein belongs to the RimK family. The cofactor is Mg(2+). It depends on Mn(2+) as a cofactor.

In Hahella chejuensis (strain KCTC 2396), this protein is Probable alpha-L-glutamate ligase 2.